Here is a 308-residue protein sequence, read N- to C-terminus: tRNA dimethylallyltransferase (308 aa).

17–24 is a binding site for ATP; that stretch reads GPTGSGKS. Residue 19-24 coordinates substrate; it reads TGSGKS.

It belongs to the IPP transferase family. As to quaternary structure, monomer. Requires Mg(2+) as cofactor.

The catalysed reaction is adenosine(37) in tRNA + dimethylallyl diphosphate = N(6)-dimethylallyladenosine(37) in tRNA + diphosphate. Functionally, catalyzes the transfer of a dimethylallyl group onto the adenine at position 37 in tRNAs that read codons beginning with uridine, leading to the formation of N6-(dimethylallyl)adenosine (i(6)A). The chain is tRNA dimethylallyltransferase from Paenarthrobacter aurescens (strain TC1).